We begin with the raw amino-acid sequence, 451 residues long: Chromosomal replication initiator protein DnaA (451 aa).

The domain I, interacts with DnaA modulators stretch occupies residues 1 to 77; sequence MTENEQIFWN…EVYNAQISVD (77 aa). The interval 77 to 110 is domain II; that stretch reads DYVFEEDLMIEQNQTKINQKPKQQALNSLPTVTS. Residues 111–329 form a domain III, AAA+ region region; the sequence is DLNSKYSFEN…GALKDISLVA (219 aa). Residues glycine 155, glycine 157, lysine 158, and threonine 159 each coordinate ATP. The interval 330–451 is domain IV, binds dsDNA; sequence NFKQIDTITV…EIETIKNKIK (122 aa).

This sequence belongs to the DnaA family. In terms of assembly, oligomerizes as a right-handed, spiral filament on DNA at oriC.

It is found in the cytoplasm. Plays an essential role in the initiation and regulation of chromosomal replication. ATP-DnaA binds to the origin of replication (oriC) to initiate formation of the DNA replication initiation complex once per cell cycle. Binds the DnaA box (a 9 base pair repeat at the origin) and separates the double-stranded (ds)DNA. Forms a right-handed helical filament on oriC DNA; dsDNA binds to the exterior of the filament while single-stranded (ss)DNA is stabiized in the filament's interior. The ATP-DnaA-oriC complex binds and stabilizes one strand of the AT-rich DNA unwinding element (DUE), permitting loading of DNA polymerase. After initiation quickly degrades to an ADP-DnaA complex that is not apt for DNA replication. Binds acidic phospholipids. Its function is as follows. The half-life of ATP-DnaA is 12 minutes at 37 degrees Celsius, in E.coli the half-life is about 41 minutes. The polypeptide is Chromosomal replication initiator protein DnaA (Streptococcus pyogenes serotype M1).